Reading from the N-terminus, the 180-residue chain is MADYLKLFQDSLKGLDTKFAGNQILSRIEAQTKLPRSYVIVGLVAVYFLLIFINVGGIGEILSNFVGFCIPTYYSLKALKTATSTDDTQLLTYWIVFSFLSVIEFWSKAILYWVPFYWFFKTVFLLYIAIPSFGGAQLVYTRLISPFSDKYLPIVEGKSGELAQKVEAAANNAKASGYSR.

Topologically, residues 1-35 (MADYLKLFQDSLKGLDTKFAGNQILSRIEAQTKLP) are cytoplasmic. Residues 36-55 (RSYVIVGLVAVYFLLIFINV) form a helical membrane-spanning segment. The Lumenal segment spans residues 56 to 57 (GG). The chain crosses the membrane as a helical span at residues 58-78 (IGEILSNFVGFCIPTYYSLKA). The Cytoplasmic segment spans residues 79-88 (LKTATSTDDT). The helical transmembrane segment at 89–105 (QLLTYWIVFSFLSVIEF) threads the bilayer. Residues 106–108 (WSK) lie on the Lumenal side of the membrane. A helical membrane pass occupies residues 109–127 (AILYWVPFYWFFKTVFLLY). The Cytoplasmic portion of the chain corresponds to 128 to 180 (IAIPSFGGAQLVYTRLISPFSDKYLPIVEGKSGELAQKVEAAANNAKASGYSR).

The protein belongs to the DP1 family. Oligomer.

Its subcellular location is the endoplasmic reticulum membrane. The protein localises to the golgi apparatus membrane. In terms of biological role, required to generate and maintain the structure of the tubular endoplasmic reticulum network and the vacuole. Induces high curvature in membranes and causes membrane tubule formation. Involved in membrane/vesicle trafficking. The polypeptide is Protein YOP1 (YOP1) (Kluyveromyces lactis (strain ATCC 8585 / CBS 2359 / DSM 70799 / NBRC 1267 / NRRL Y-1140 / WM37) (Yeast)).